We begin with the raw amino-acid sequence, 129 residues long: Small ribosomal subunit protein uS11 (129 aa).

The interval 109 to 129 is disordered; that stretch reads VDDTPVPHNGCRPKKKFRKAS. Residues 119–129 are compositionally biased toward basic residues; it reads CRPKKKFRKAS.

The protein belongs to the universal ribosomal protein uS11 family. As to quaternary structure, part of the 30S ribosomal subunit. Interacts with proteins S7 and S18. Binds to the C-terminus of IF-3; however exactly how IF-3 interacts with the 30S subunit is unclear.

Located on the upper part of the platform of the 30S subunit, where it bridges several disparate RNA helices of the 16S rRNA. Forms part of the Shine-Dalgarno cleft in the 70S ribosome. The sequence is that of Small ribosomal subunit protein uS11 (rpsK) from Thermus thermophilus (strain ATCC BAA-163 / DSM 7039 / HB27).